The following is a 249-amino-acid chain: Small ribosomal subunit protein uS3y (249 aa).

Residues Leu21–Asn92 form the KH type-2 domain. At Ser212 the chain carries Phosphoserine.

This sequence belongs to the universal ribosomal protein uS3 family.

The sequence is that of Small ribosomal subunit protein uS3y (RPS3B) from Arabidopsis thaliana (Mouse-ear cress).